Consider the following 174-residue polypeptide: Protein PopB (174 aa).

The interval 1-174 (MSHSKIKAGG…EAMKIKDDDD (174 aa)) is disordered. Residues 50-65 (LNKSNLGSDSQTWTPG) are compositionally biased toward polar residues. Low complexity predominate over residues 66–78 (STMVSLKSRSSSS). Residues 79–89 (HKPDTGGDTKP) are compositionally biased toward basic and acidic residues. The span at 147–161 (IALQRAIQRQTQTRQ) shows a compositional bias: low complexity. The span at 162-174 (KMQEAMKIKDDDD) shows a compositional bias: basic and acidic residues.

The protein localises to the secreted. In terms of biological role, probably involved in host-pathogen interactions. The protein is Protein PopB (popB) of Ralstonia nicotianae (strain ATCC BAA-1114 / GMI1000) (Ralstonia solanacearum).